Reading from the N-terminus, the 275-residue chain is 2,3,4,5-tetrahydropyridine-2,6-dicarboxylate N-succinyltransferase (275 aa).

This sequence belongs to the transferase hexapeptide repeat family.

It is found in the cytoplasm. It carries out the reaction (S)-2,3,4,5-tetrahydrodipicolinate + succinyl-CoA + H2O = (S)-2-succinylamino-6-oxoheptanedioate + CoA. The protein operates within amino-acid biosynthesis; L-lysine biosynthesis via DAP pathway; LL-2,6-diaminopimelate from (S)-tetrahydrodipicolinate (succinylase route): step 1/3. In Ralstonia pickettii (strain 12J), this protein is 2,3,4,5-tetrahydropyridine-2,6-dicarboxylate N-succinyltransferase.